The sequence spans 48 residues: AVEKVNSSSSLAEVIDRILDKGIVIDAWVRVSLVGIELLSVEARXVIA.

This sequence belongs to the gas vesicle GvpA family. In terms of assembly, the gas vesicle shell is 2 nm thick and consists of a single layer of this protein. It forms helical ribs nearly perpendicular to the long axis of the vesicle.

The protein resides in the gas vesicle shell. Gas vesicles are hollow, gas filled proteinaceous nanostructures found in some microorganisms. During planktonic growth they allow positioning of the organism at a favorable depth for light or nutrient acquisition. GvpA forms the protein shell. The chain is Gas vesicle protein A from Spirulina sp. (strain CCAP 1475/10).